Consider the following 116-residue polypeptide: Co-chaperonin GroES (116 aa).

This sequence belongs to the GroES chaperonin family. As to quaternary structure, heptamer of 7 subunits arranged in a ring. Interacts with the chaperonin GroEL.

It localises to the cytoplasm. Together with the chaperonin GroEL, plays an essential role in assisting protein folding. The GroEL-GroES system forms a nano-cage that allows encapsulation of the non-native substrate proteins and provides a physical environment optimized to promote and accelerate protein folding. GroES binds to the apical surface of the GroEL ring, thereby capping the opening of the GroEL channel. The chain is Co-chaperonin GroES from Mycoplasma pneumoniae (strain ATCC 29342 / M129 / Subtype 1) (Mycoplasmoides pneumoniae).